The following is a 294-amino-acid chain: 2,2',3-trihydroxybiphenyl dioxygenase (294 aa).

VOC domains follow at residues 7–120 (GYLI…LYVE) and 144–264 (GLGH…LGFG). Fe cation contacts are provided by histidine 147, histidine 209, and glutamate 260.

Belongs to the extradiol ring-cleavage dioxygenase family. Monomer. Fe(2+) serves as cofactor.

It functions in the pathway xenobiotic degradation; dibenzo-p-dioxin degradation; 2-hydroxymuconate and catechol from dibenzo-p-dioxin: step 2/3. It participates in xenobiotic degradation; dibenzofuran degradation; 2-hydroxy-2,4-pentadienoate and salicylate from dibenzofuran: step 2/3. Functionally, responsible for meta-cleavage of the first aromatic ring of 2,2',3-trihydroxybiphenyl and 2,3-dihydroxybiphenyl. 2,2',3-trihydroxydiphenyl ether, catechol, 3-methylcatechol, and 4-methylcatechol are oxidized less efficiently and 3,4-dihydroxybiphenyl is oxidized considerably less efficiently. The protein is 2,2',3-trihydroxybiphenyl dioxygenase (dbfB) of Sphingomonas paucimobilis (Pseudomonas paucimobilis).